Here is a 485-residue protein sequence, read N- to C-terminus: Probable glycine dehydrogenase (decarboxylating) subunit 2 (485 aa).

N6-(pyridoxal phosphate)lysine is present on Lys273.

This sequence belongs to the GcvP family. C-terminal subunit subfamily. As to quaternary structure, the glycine cleavage system is composed of four proteins: P, T, L and H. In this organism, the P 'protein' is a heterodimer of two subunits. The cofactor is pyridoxal 5'-phosphate.

The catalysed reaction is N(6)-[(R)-lipoyl]-L-lysyl-[glycine-cleavage complex H protein] + glycine + H(+) = N(6)-[(R)-S(8)-aminomethyldihydrolipoyl]-L-lysyl-[glycine-cleavage complex H protein] + CO2. Its function is as follows. The glycine cleavage system catalyzes the degradation of glycine. The P protein binds the alpha-amino group of glycine through its pyridoxal phosphate cofactor; CO(2) is released and the remaining methylamine moiety is then transferred to the lipoamide cofactor of the H protein. The chain is Probable glycine dehydrogenase (decarboxylating) subunit 2 from Caldanaerobacter subterraneus subsp. tengcongensis (strain DSM 15242 / JCM 11007 / NBRC 100824 / MB4) (Thermoanaerobacter tengcongensis).